A 182-amino-acid chain; its full sequence is Large ribosomal subunit protein uL5 (182 aa).

This sequence belongs to the universal ribosomal protein uL5 family. In terms of assembly, part of the 50S ribosomal subunit; part of the 5S rRNA/L5/L18/L25 subcomplex. Contacts the 5S rRNA and the P site tRNA. Forms a bridge to the 30S subunit in the 70S ribosome.

In terms of biological role, this is one of the proteins that bind and probably mediate the attachment of the 5S RNA into the large ribosomal subunit, where it forms part of the central protuberance. In the 70S ribosome it contacts protein S13 of the 30S subunit (bridge B1b), connecting the 2 subunits; this bridge is implicated in subunit movement. Contacts the P site tRNA; the 5S rRNA and some of its associated proteins might help stabilize positioning of ribosome-bound tRNAs. This chain is Large ribosomal subunit protein uL5, found in Thermus thermophilus (strain ATCC BAA-163 / DSM 7039 / HB27).